Consider the following 192-residue polypeptide: Putative manganese efflux pump MntP (192 aa).

6 consecutive transmembrane segments (helical) span residues 2–22 (IAIIVQTLLISVSVAMDAFAV), 41–61 (SALWFGGSQALFLILGHYAAS), 62–82 (AFSAYVTAFDHWIIFGLLAFI), 109–129 (MLPLAVACSIDAFAVGVSLAF), 136–156 (FAILCISVVTGLFSAAGLYIG), and 172–192 (GVVLILIGVKVLLEHLGVIAF).

It belongs to the MntP (TC 9.B.29) family.

It localises to the cell membrane. In terms of biological role, probably functions as a manganese efflux pump. This is Putative manganese efflux pump MntP from Bifidobacterium longum subsp. infantis (strain ATCC 15697 / DSM 20088 / JCM 1222 / NCTC 11817 / S12).